Here is an 88-residue protein sequence, read N- to C-terminus: MIDKKQKQKIVSEFGKNESDTGSVGVQIALITGRIKYLTEHLKTNKKDHSSKRGLLKLVGQRRSLLRYYQKKDLEAYRILISKLGLRK.

This sequence belongs to the universal ribosomal protein uS15 family. As to quaternary structure, part of the 30S ribosomal subunit. Forms a bridge to the 50S subunit in the 70S ribosome, contacting the 23S rRNA.

In terms of biological role, one of the primary rRNA binding proteins, it binds directly to 16S rRNA where it helps nucleate assembly of the platform of the 30S subunit by binding and bridging several RNA helices of the 16S rRNA. Forms an intersubunit bridge (bridge B4) with the 23S rRNA of the 50S subunit in the ribosome. This chain is Small ribosomal subunit protein uS15, found in Borrelia garinii subsp. bavariensis (strain ATCC BAA-2496 / DSM 23469 / PBi) (Borreliella bavariensis).